Reading from the N-terminus, the 215-residue chain is 2-phospho-L-lactate guanylyltransferase (215 aa).

This sequence belongs to the CofC family. In terms of assembly, homodimer.

It catalyses the reaction (2S)-2-phospholactate + GTP + H(+) = (2S)-lactyl-2-diphospho-5'-guanosine + diphosphate. The protein operates within cofactor biosynthesis; coenzyme F420 biosynthesis. In terms of biological role, guanylyltransferase that catalyzes the activation of (2S)-2-phospholactate (2-PL) as (2S)-lactyl-2-diphospho-5'-guanosine, via the condensation of 2-PL with GTP. It is involved in the biosynthesis of coenzyme F420, a hydride carrier cofactor. This is 2-phospho-L-lactate guanylyltransferase from Methanococcoides burtonii (strain DSM 6242 / NBRC 107633 / OCM 468 / ACE-M).